The sequence spans 426 residues: D-tagatose-1,6-bisphosphate aldolase subunit KbaZ (426 aa).

It belongs to the GatZ/KbaZ family. KbaZ subfamily. As to quaternary structure, forms a complex with KbaY.

It participates in carbohydrate metabolism; D-tagatose 6-phosphate degradation; D-glyceraldehyde 3-phosphate and glycerone phosphate from D-tagatose 6-phosphate: step 2/2. Functionally, component of the tagatose-1,6-bisphosphate aldolase KbaYZ that is required for full activity and stability of the Y subunit. Could have a chaperone-like function for the proper and stable folding of KbaY. When expressed alone, KbaZ does not show any aldolase activity. The chain is D-tagatose-1,6-bisphosphate aldolase subunit KbaZ from Escherichia coli O8 (strain IAI1).